Reading from the N-terminus, the 43-residue chain is Iota-conotoxin-like S11.2 (43 aa).

4 cysteine pairs are disulfide-bonded: C2/C16, C9/C19, C15/C24, and C18/C35. A D-methionine modification is found at M41. Residue R43 is a propeptide, removed by a carboxypeptidase.

Belongs to the conotoxin I1 superfamily. Expressed by the venom duct.

It is found in the secreted. Its function is as follows. Iota-conotoxins bind to voltage-gated sodium channels (Nav) and act as agonists by shifting the voltage-dependence of activation to more hyperpolarized levels. Produces general excitatory symptoms. The chain is Iota-conotoxin-like S11.2 from Conus striatus (Striated cone).